The primary structure comprises 758 residues: Vitamin K-dependent gamma-carboxylase (758 aa).

The disordered stretch occupies residues 1–31 (MAVSARSARSPPDSDKVQKDKAGQTSGRRQG). Ala-2 carries the N-acetylalanine modification. Over 2 to 60 (AVSARSARSPPDSDKVQKDKAGQTSGRRQGSRMGKLLGFEWTDVSSWGKLVTLLNRPTD) the chain is Cytoplasmic. Basic and acidic residues predominate over residues 12-22 (PDSDKVQKDKA). A helical transmembrane segment spans residues 61–81 (PASLAVFRFLFGLMMVLDIPQ). The Lumenal segment spans residues 82–113 (ERGLSSLDRRYLDGLEVCRFPLLDALQPLPLD). Cys-99 and Cys-450 are oxidised to a cystine. The helical transmembrane segment at 114-134 (WMYLVYTIMFLGALGMMLGLR) threads the bilayer. Topologically, residues 135–136 (YR) are cytoplasmic. Residues 137-157 (ISCVLFLLPYWYVFLLDKTSW) traverse the membrane as a helical segment. At 158-292 (NNHSYLYGLL…VSYFHCMNSQ (135 aa)) the chain is on the lumenal side. A helical transmembrane segment spans residues 293 to 313 (LFSIGMFPYVMLASSPLFCSP). Topologically, residues 314 to 361 (EWPRKLVAHCPKRLQELLPLRTAPQPSASCVYKRSRAKGGQKPGLRHR) are cytoplasmic. The chain crosses the membrane as a helical span at residues 362 to 382 (LGAAFTLLYLLEQLFLPYSHF). At 383–758 (LTQGYNNWTN…PNADAVHSEF (376 aa)) the chain is on the lumenal side. Residues 727 to 758 (PFEPVGEPSPSNTDSSNPNPSEPNADAVHSEF) are disordered. Residues 734–750 (PSPSNTDSSNPNPSEPN) show a composition bias toward low complexity.

The protein belongs to the vitamin K-dependent gamma-carboxylase family. As to quaternary structure, monomer. May interact with CALU.

It localises to the endoplasmic reticulum membrane. The enzyme catalyses 4-carboxy-L-glutamyl-[protein] + 2,3-epoxyphylloquinone + H2O + H(+) = phylloquinol + L-glutamyl-[protein] + CO2 + O2. Its function is as follows. Mediates the vitamin K-dependent carboxylation of glutamate residues to calcium-binding gamma-carboxyglutamate (Gla) residues with the concomitant conversion of the reduced hydroquinone form of vitamin K to vitamin K epoxide. Catalyzes gamma-carboxylation of various proteins, such as blood coagulation factors (F2, F7, F9 and F10), osteocalcin (BGLAP) or matrix Gla protein (MGP). This Delphinapterus leucas (Beluga whale) protein is Vitamin K-dependent gamma-carboxylase (GGCX).